Here is a 111-residue protein sequence, read N- to C-terminus: Small ribosomal subunit protein bS16 (111 aa).

The protein belongs to the bacterial ribosomal protein bS16 family.

The protein is Small ribosomal subunit protein bS16 of Rickettsia typhi (strain ATCC VR-144 / Wilmington).